Reading from the N-terminus, the 212-residue chain is Octanoyltransferase (212 aa).

The BPL/LPL catalytic domain occupies 30–205 (ETTVDELWCL…ELVEGLGHSQ (176 aa)). Residues 69-76 (RGGQVTYH), 136-138 (SLG), and 149-151 (GLA) each bind substrate. The active-site Acyl-thioester intermediate is the Cys-167.

This sequence belongs to the LipB family.

The protein localises to the cytoplasm. The catalysed reaction is octanoyl-[ACP] + L-lysyl-[protein] = N(6)-octanoyl-L-lysyl-[protein] + holo-[ACP] + H(+). It participates in protein modification; protein lipoylation via endogenous pathway; protein N(6)-(lipoyl)lysine from octanoyl-[acyl-carrier-protein]: step 1/2. Its function is as follows. Catalyzes the transfer of endogenously produced octanoic acid from octanoyl-acyl-carrier-protein onto the lipoyl domains of lipoate-dependent enzymes. Lipoyl-ACP can also act as a substrate although octanoyl-ACP is likely to be the physiological substrate. In Marinobacter nauticus (strain ATCC 700491 / DSM 11845 / VT8) (Marinobacter aquaeolei), this protein is Octanoyltransferase.